We begin with the raw amino-acid sequence, 205 residues long: Thiamine-phosphate synthase (205 aa).

Residues 35 to 39 (QYRDK) and N67 each bind 4-amino-2-methyl-5-(diphosphooxymethyl)pyrimidine. Mg(2+) contacts are provided by D68 and D86. T105 is a 4-amino-2-methyl-5-(diphosphooxymethyl)pyrimidine binding site. 132–134 (SQT) serves as a coordination point for 2-[(2R,5Z)-2-carboxy-4-methylthiazol-5(2H)-ylidene]ethyl phosphate. K135 lines the 4-amino-2-methyl-5-(diphosphooxymethyl)pyrimidine pocket. G162 is a binding site for 2-[(2R,5Z)-2-carboxy-4-methylthiazol-5(2H)-ylidene]ethyl phosphate.

It belongs to the thiamine-phosphate synthase family. Mg(2+) serves as cofactor.

It catalyses the reaction 2-[(2R,5Z)-2-carboxy-4-methylthiazol-5(2H)-ylidene]ethyl phosphate + 4-amino-2-methyl-5-(diphosphooxymethyl)pyrimidine + 2 H(+) = thiamine phosphate + CO2 + diphosphate. It carries out the reaction 2-(2-carboxy-4-methylthiazol-5-yl)ethyl phosphate + 4-amino-2-methyl-5-(diphosphooxymethyl)pyrimidine + 2 H(+) = thiamine phosphate + CO2 + diphosphate. The enzyme catalyses 4-methyl-5-(2-phosphooxyethyl)-thiazole + 4-amino-2-methyl-5-(diphosphooxymethyl)pyrimidine + H(+) = thiamine phosphate + diphosphate. It functions in the pathway cofactor biosynthesis; thiamine diphosphate biosynthesis; thiamine phosphate from 4-amino-2-methyl-5-diphosphomethylpyrimidine and 4-methyl-5-(2-phosphoethyl)-thiazole: step 1/1. Functionally, condenses 4-methyl-5-(beta-hydroxyethyl)thiazole monophosphate (THZ-P) and 2-methyl-4-amino-5-hydroxymethyl pyrimidine pyrophosphate (HMP-PP) to form thiamine monophosphate (TMP). In Pseudomonas syringae pv. tomato (strain ATCC BAA-871 / DC3000), this protein is Thiamine-phosphate synthase.